We begin with the raw amino-acid sequence, 343 residues long: Heat-inducible transcription repressor HrcA (343 aa).

This sequence belongs to the HrcA family.

In terms of biological role, negative regulator of class I heat shock genes (grpE-dnaK-dnaJ and groELS operons). Prevents heat-shock induction of these operons. This Mycoplasma genitalium (strain ATCC 33530 / DSM 19775 / NCTC 10195 / G37) (Mycoplasmoides genitalium) protein is Heat-inducible transcription repressor HrcA.